Consider the following 146-residue polypeptide: Large-conductance mechanosensitive channel (146 aa).

Transmembrane regions (helical) follow at residues 21-41, 44-64, and 83-103; these read VGIIIGAAFTGIVSSLVADLI, IIGLITGGIDFSNLFVNLGDG, and GSFITAVINFLIIAWVVFLLV.

This sequence belongs to the MscL family. As to quaternary structure, homopentamer.

It localises to the cell inner membrane. Its function is as follows. Channel that opens in response to stretch forces in the membrane lipid bilayer. May participate in the regulation of osmotic pressure changes within the cell. This Cereibacter sphaeroides (strain ATCC 17029 / ATH 2.4.9) (Rhodobacter sphaeroides) protein is Large-conductance mechanosensitive channel.